A 374-amino-acid chain; its full sequence is Arf-GAP with dual PH domain-containing protein 1 (374 aa).

Residues 7–126 (RAVLELLQRP…EFIYPEKQEP (120 aa)) form the Arf-GAP domain. The C4-type zinc-finger motif lies at 21–44 (CADCGAPDPDWASYTLGVFICLSC). At Ser-87 the chain carries Phosphoserine; by PKC. PH domains are found at residues 129–230 (AGYR…AARF) and 252–356 (NYLK…KAVD). Lys-272 bears the N6-acetyllysine mark. Residue Thr-276 is modified to Phosphothreonine; by PKC.

As to quaternary structure, interacts with PRKCA, PRKCI and PRKCZ. Interacts with the N-terminal region of PRKD1. Phosphorylated by PRKCA, PRKCI, PRKCZ and PRKD1 in vitro. As to expression, expressed at highest levels in brain and at lower levels in peripheral blood leukocytes.

The protein resides in the nucleus. Its subcellular location is the cytoplasm. In terms of biological role, GTPase-activating protein for the ADP ribosylation factor family. Binds phosphatidylinositol 3,4,5-trisphosphate (PtdInsP3) and inositol 1,3,4,5-tetrakisphosphate (InsP4). Regulates the incorporation of CD63 and CD9 into multivesicular bodies. In Homo sapiens (Human), this protein is Arf-GAP with dual PH domain-containing protein 1 (ADAP1).